A 397-amino-acid chain; its full sequence is Tryptophan synthase beta chain (397 aa).

Residue lysine 87 is modified to N6-(pyridoxal phosphate)lysine.

This sequence belongs to the TrpB family. In terms of assembly, tetramer of two alpha and two beta chains. Pyridoxal 5'-phosphate is required as a cofactor.

It catalyses the reaction (1S,2R)-1-C-(indol-3-yl)glycerol 3-phosphate + L-serine = D-glyceraldehyde 3-phosphate + L-tryptophan + H2O. Its pathway is amino-acid biosynthesis; L-tryptophan biosynthesis; L-tryptophan from chorismate: step 5/5. The beta subunit is responsible for the synthesis of L-tryptophan from indole and L-serine. The protein is Tryptophan synthase beta chain of Escherichia coli O45:K1 (strain S88 / ExPEC).